The sequence spans 338 residues: Ketol-acid reductoisomerase (NADP(+)) (338 aa).

Positions 1–181 (MKVYYDKDAD…GGTKGGVIET (181 aa)) constitute a KARI N-terminal Rossmann domain. Residues 24 to 27 (YGSQ), Arg47, and Ser52 each bind NADP(+). The active site involves His107. Gly133 is a binding site for NADP(+). Residues 182–327 (NFREETETDL…SQLRAMMPWI (146 aa)) enclose the KARI C-terminal knotted domain. Asp190, Glu194, Glu226, and Glu230 together coordinate Mg(2+). Residue Ser251 coordinates substrate.

It belongs to the ketol-acid reductoisomerase family. Mg(2+) is required as a cofactor.

The enzyme catalyses (2R)-2,3-dihydroxy-3-methylbutanoate + NADP(+) = (2S)-2-acetolactate + NADPH + H(+). It carries out the reaction (2R,3R)-2,3-dihydroxy-3-methylpentanoate + NADP(+) = (S)-2-ethyl-2-hydroxy-3-oxobutanoate + NADPH + H(+). The protein operates within amino-acid biosynthesis; L-isoleucine biosynthesis; L-isoleucine from 2-oxobutanoate: step 2/4. Its pathway is amino-acid biosynthesis; L-valine biosynthesis; L-valine from pyruvate: step 2/4. Functionally, involved in the biosynthesis of branched-chain amino acids (BCAA). Catalyzes an alkyl-migration followed by a ketol-acid reduction of (S)-2-acetolactate (S2AL) to yield (R)-2,3-dihydroxy-isovalerate. In the isomerase reaction, S2AL is rearranged via a Mg-dependent methyl migration to produce 3-hydroxy-3-methyl-2-ketobutyrate (HMKB). In the reductase reaction, this 2-ketoacid undergoes a metal-dependent reduction by NADPH to yield (R)-2,3-dihydroxy-isovalerate. In Methylobacillus flagellatus (strain ATCC 51484 / DSM 6875 / VKM B-1610 / KT), this protein is Ketol-acid reductoisomerase (NADP(+)).